A 722-amino-acid polypeptide reads, in one-letter code: Polymerase basic protein 2 (722 aa).

In terms of assembly, the RNA polymerase is composed of three subunits: PB1, PB2 and PA.

Its subcellular location is the virion. It is found in the host nucleus. In terms of biological role, involved in transcription initiation and cap-stealing mechanism, in which cellular capped pre-mRNA are used to generate primers for viral transcription. Binds the cap of the target pre-RNA which is subsequently cleaved by PB1. May play a role in genome replication. The polypeptide is Polymerase basic protein 2 (Gadus morhua (Atlantic cod)).